Here is a 394-residue protein sequence, read N- to C-terminus: Tryptophan synthase beta chain (394 aa).

K90 bears the N6-(pyridoxal phosphate)lysine mark.

It belongs to the TrpB family. As to quaternary structure, tetramer of two alpha and two beta chains. The cofactor is pyridoxal 5'-phosphate.

It catalyses the reaction (1S,2R)-1-C-(indol-3-yl)glycerol 3-phosphate + L-serine = D-glyceraldehyde 3-phosphate + L-tryptophan + H2O. Its pathway is amino-acid biosynthesis; L-tryptophan biosynthesis; L-tryptophan from chorismate: step 5/5. The beta subunit is responsible for the synthesis of L-tryptophan from indole and L-serine. The protein is Tryptophan synthase beta chain of Parabacteroides distasonis (strain ATCC 8503 / DSM 20701 / CIP 104284 / JCM 5825 / NCTC 11152).